The following is a 646-amino-acid chain: A-kinase anchor protein 8-like (646 aa).

The interval 1 to 268 (MSYTGFVQGS…MRRTWKTWTT (268 aa)) is sufficient for activation of CTE-mediated expression. An Asymmetric dimethylarginine; alternate modification is found at Arg-208. Residue Arg-208 is modified to Omega-N-methylarginine; alternate. Residues Arg-217, Arg-237, and Arg-247 each carry the omega-N-methylarginine modification. The residue at position 257 (Lys-257) is an N6-acetyllysine. The tract at residues 264 to 381 (KTWTTADFRT…QDKQKKRQRD (118 aa)) is disordered. Thr-267 is modified (phosphothreonine). Positions 274 to 279 (KKKKRK) match the Nuclear localization signal motif. The Nuclear export signal (NES) signature appears at 280–296 (QGGSPDEPDSKATRTDC). Ser-283 is modified (phosphoserine). Over residues 287-296 (PDSKATRTDC) the composition is skewed to basic and acidic residues. The residue at position 292 (Thr-292) is a Phosphothreonine. At Ser-297 the chain carries Phosphoserine. Residues 298–314 (DNSDSDNDEGTEGEATE) show a composition bias toward acidic residues. A compositionally biased stretch (basic and acidic residues) spans 337 to 349 (EDGREEGKEDPEK). Residues 362 to 364 (KRK) carry the Nuclear localization signal motif. 2 consecutive C2H2 AKAP95-type zinc fingers follow at residues 391 to 413 (CSLC…SKFH) and 484 to 507 (CAAC…TMDH). The segment at 545-646 (GENPFTDSPE…DDEEGGGGAP (102 aa)) is disordered. Ser-552 carries the phosphoserine modification. Residues 552 to 563 (SPEEEKEQEEAE) are compositionally biased toward acidic residues. Over residues 564-586 (GGALDEGAQGEAAGISEGAEGVP) the composition is skewed to low complexity. Over residues 587 to 607 (AQPPVPPEPAPGAVSPPPPPP) the composition is skewed to pro residues. Acidic residues predominate over residues 634-646 (DVEDDEEGGGGAP).

This sequence belongs to the AKAP95 family. In terms of assembly, interacts (via N-terminus) with DHX9 (via RGG region). Interacts with TMPO isoform Beta, PRPF40A, RNF43, lamin-B. Interacts with HDAC3; increased during mitosis. Interacts with EBV EBNA-LP. Interacts with HIV-1 reverse transcriptase/ribonuclease H. Post-translationally, phosphorylated on serine or threonine residues possibly by PKA; probably modulating the interaction with TMPO isoform Beta. As to expression, ubiquitously expressed. Expressed in the brain cortex (at protein level).

The protein localises to the nucleus. Its subcellular location is the nucleus matrix. It localises to the nucleus speckle. It is found in the PML body. The protein resides in the cytoplasm. Its function is as follows. Could play a role in constitutive transport element (CTE)-mediated gene expression by association with DHX9. Increases CTE-dependent nuclear unspliced mRNA export. Proposed to target PRKACA to the nucleus but does not seem to be implicated in the binding of regulatory subunit II of PKA. May be involved in nuclear envelope breakdown and chromatin condensation. May be involved in anchoring nuclear membranes to chromatin in interphase and in releasing membranes from chromating at mitosis. May regulate the initiation phase of DNA replication when associated with TMPO isoform Beta. Required for cell cycle G2/M transition and histone deacetylation during mitosis. In mitotic cells recruits HDAC3 to the vicinity of chromatin leading to deacetylation and subsequent phosphorylation at 'Ser-10' of histone H3; in this function seems to act redundantly with AKAP8. May be involved in regulation of pre-mRNA splicing. Functionally, (Microbial infection) In case of EBV infection, may target PRKACA to EBNA-LP-containing nuclear sites to modulate transcription from specific promoters. In terms of biological role, (Microbial infection) Can synergize with DHX9 to activate the CTE-mediated gene expression of type D retroviruses. (Microbial infection) In case of HIV-1 infection, involved in the DHX9-promoted annealing of host tRNA(Lys3) to viral genomic RNA as a primer in reverse transcription; in vitro negatively regulates DHX9 annealing activity. The protein is A-kinase anchor protein 8-like (AKAP8L) of Homo sapiens (Human).